A 257-amino-acid polypeptide reads, in one-letter code: Undecaprenyl-diphosphatase (257 aa).

8 helical membrane passes run 4–24 (LIRV…PISS), 41–61 (SVTL…VVFW), 74–94 (VIGL…TIKT), 103–123 (PLLA…LGRL), 133–153 (LGLG…LPGI), 173–193 (SVTF…VLAI), 209–229 (VLSI…KWLI), and 236–256 (RLHW…LLNL).

It belongs to the UppP family.

It localises to the cell inner membrane. The catalysed reaction is di-trans,octa-cis-undecaprenyl diphosphate + H2O = di-trans,octa-cis-undecaprenyl phosphate + phosphate + H(+). Its function is as follows. Catalyzes the dephosphorylation of undecaprenyl diphosphate (UPP). Confers resistance to bacitracin. The chain is Undecaprenyl-diphosphatase from Rhodopirellula baltica (strain DSM 10527 / NCIMB 13988 / SH1).